Reading from the N-terminus, the 160-residue chain is Lipoprotein signal peptidase (160 aa).

2 consecutive transmembrane segments (helical) span residues proline 59–isoleucine 79 and serine 84–aspartate 104. Active-site residues include aspartate 113 and aspartate 139. The chain crosses the membrane as a helical span at residues tryptophan 132 to phenylalanine 152.

Belongs to the peptidase A8 family.

It localises to the cell inner membrane. It catalyses the reaction Release of signal peptides from bacterial membrane prolipoproteins. Hydrolyzes -Xaa-Yaa-Zaa-|-(S,diacylglyceryl)Cys-, in which Xaa is hydrophobic (preferably Leu), and Yaa (Ala or Ser) and Zaa (Gly or Ala) have small, neutral side chains.. Its pathway is protein modification; lipoprotein biosynthesis (signal peptide cleavage). In terms of biological role, this protein specifically catalyzes the removal of signal peptides from prolipoproteins. The protein is Lipoprotein signal peptidase of Chlorobaculum parvum (strain DSM 263 / NCIMB 8327) (Chlorobium vibrioforme subsp. thiosulfatophilum).